The following is a 421-amino-acid chain: MDLENKVKKMGLGHEQGFGAPCLKCKEKCEGFELHFWRKICRNCKCGQEEHDVLLSNEEDRKVGKLFEDTKYTTLIAKLKSDGIPMYKRNVMILTNPVAAKKNVSINTVTYEWAPPVHNQALARQYMQMLPKEKQPVAGSEGAQYRKKQLAKQLPAHDQDPSKCHELSPREVKEMEQFVKKYKSEALGVGDVKLPCEMDAQGPKQMYIPGGDRSTPPAAGAMEDKSAEHKSTQYSCYCCKLSMKEGDPAIYAERAGYDKLWHPACFVCSICHELLVDMIYFWKNEKLYCGRHYCDSEKPRCAGCDELIFSNEYTQAEKQSWHLKHFCCFACDGILAGDIYVMVNDKPVCKPCYVKNHAVVCQGCHNAIDPEVQRVTYNNFSWHASTECFLCSCCSKCLIGQKFMPVEGMVFCSVECKKMMS.

One can recognise a PET domain in the interval 92–199; sequence MILTNPVAAK…GDVKLPCEMD (108 aa). A disordered region spans residues 133 to 164; the sequence is EKQPVAGSEGAQYRKKQLAKQLPAHDQDPSKC. Over residues 155–164 the composition is skewed to basic and acidic residues; that stretch reads PAHDQDPSKC. LIM zinc-binding domains lie at 234 to 297, 299 to 359, and 362 to 421; these read YSCY…CDSE, PRCA…NHAV, and QGCH…KMMS.

This sequence belongs to the prickle / espinas / testin family. As to quaternary structure, interacts via LIM domain 1 with ZYX. Interacts (via LIM domain 3) with ENAH and VASP. Interacts with ALKBH4, talin, actin, alpha-actinin, GRIP1 and PXN. Interacts (via LIM domain 2) with ACTL7A (via N-terminus). Heterodimer with ACTL7A; the heterodimer interacts with ENAH to form a heterotrimer.

It is found in the cytoplasm. The protein localises to the cell junction. It localises to the focal adhesion. In terms of biological role, scaffold protein that may play a role in cell adhesion, cell spreading and in the reorganization of the actin cytoskeleton. Plays a role in the regulation of cell proliferation. May act as a tumor suppressor. The protein is Testin (TES) of Callithrix jacchus (White-tufted-ear marmoset).